The chain runs to 132 residues: D-ribose pyranase (132 aa).

Histidine 20 acts as the Proton donor in catalysis. Substrate-binding positions include aspartate 28, histidine 99, and 121–123; that span reads YAN.

It belongs to the RbsD / FucU family. RbsD subfamily. As to quaternary structure, homodecamer.

It is found in the cytoplasm. The catalysed reaction is beta-D-ribopyranose = beta-D-ribofuranose. It participates in carbohydrate metabolism; D-ribose degradation; D-ribose 5-phosphate from beta-D-ribopyranose: step 1/2. Catalyzes the interconversion of beta-pyran and beta-furan forms of D-ribose. The sequence is that of D-ribose pyranase from Variovorax paradoxus (strain S110).